Reading from the N-terminus, the 119-residue chain is Large ribosomal subunit protein bL20 (119 aa).

Belongs to the bacterial ribosomal protein bL20 family.

Its function is as follows. Binds directly to 23S ribosomal RNA and is necessary for the in vitro assembly process of the 50S ribosomal subunit. It is not involved in the protein synthesizing functions of that subunit. This is Large ribosomal subunit protein bL20 from Bacillus velezensis (strain DSM 23117 / BGSC 10A6 / LMG 26770 / FZB42) (Bacillus amyloliquefaciens subsp. plantarum).